We begin with the raw amino-acid sequence, 236 residues long: Phosphoribosylaminoimidazole-succinocarboxamide synthase (236 aa).

The protein belongs to the SAICAR synthetase family.

The catalysed reaction is 5-amino-1-(5-phospho-D-ribosyl)imidazole-4-carboxylate + L-aspartate + ATP = (2S)-2-[5-amino-1-(5-phospho-beta-D-ribosyl)imidazole-4-carboxamido]succinate + ADP + phosphate + 2 H(+). The protein operates within purine metabolism; IMP biosynthesis via de novo pathway; 5-amino-1-(5-phospho-D-ribosyl)imidazole-4-carboxamide from 5-amino-1-(5-phospho-D-ribosyl)imidazole-4-carboxylate: step 1/2. In Pelodictyon phaeoclathratiforme (strain DSM 5477 / BU-1), this protein is Phosphoribosylaminoimidazole-succinocarboxamide synthase.